The chain runs to 129 residues: Ribosome-binding factor A (129 aa).

It belongs to the RbfA family. Monomer. Binds 30S ribosomal subunits, but not 50S ribosomal subunits or 70S ribosomes.

The protein resides in the cytoplasm. Its function is as follows. One of several proteins that assist in the late maturation steps of the functional core of the 30S ribosomal subunit. Associates with free 30S ribosomal subunits (but not with 30S subunits that are part of 70S ribosomes or polysomes). Required for efficient processing of 16S rRNA. May interact with the 5'-terminal helix region of 16S rRNA. The polypeptide is Ribosome-binding factor A (Thermomicrobium roseum (strain ATCC 27502 / DSM 5159 / P-2)).